We begin with the raw amino-acid sequence, 174 residues long: Membrane protein NfeD2 (174 aa).

3 helical membrane passes run 16–36 (LIIA…FSGL), 47–67 (LVLS…LVLP), and 72–92 (LIAL…HIFV).

The protein belongs to the NfeD family.

The protein localises to the cell membrane. It is found in the membrane raft. In terms of biological role, plays a role in assembly of FloT membrane rafts, probably recruited to rafts by FloT. This is Membrane protein NfeD2 from Bacillus subtilis (strain 168).